The primary structure comprises 352 residues: MLRLLASGCARGPGPGVGARPAAGLFHPGRRQSRQASDAPRNQPPSPEFVARPVGVCSMMRLPVQTSPEGLDAAFIGVPLDTGTSNRPGARFGPRRIREESVMLGTVNPSTGALPFQSLMVADLGDVNVNLYNLQDSCRRIQEAYEKIVAAGCIPLTLGGDHTITYPILQAMAKKHGPVGLLHVDAHTDTTDKALGEKLYHGAPFRRCVDEGLLDCKRVVQIGIRGSSTTLDPYRYNRSQGFRVVLAEDCWMKSLVPLMGEVRQQMGGKPIYISFDIDALDPAYAPGTGTPEIAGLTPSQALEIIRGCQGLNVMGCDLVEVSPPYDLSGNTALLAANLLFEMLCALPKVTTV.

The N-terminal 35 residues, 1-35 (MLRLLASGCARGPGPGVGARPAAGLFHPGRRQSRQ), are a transit peptide targeting the mitochondrion. A disordered region spans residues 11 to 49 (RGPGPGVGARPAAGLFHPGRRQSRQASDAPRNQPPSPEF). H162, D185, H187, and D189 together coordinate Mn(2+). At K193 the chain carries N6-acetyllysine. K217 bears the N6-acetyllysine; alternate mark. K217 is modified (N6-succinyllysine; alternate). Positions 276 and 278 each coordinate Mn(2+).

The protein belongs to the ureohydrolase superfamily. Arginase family. It depends on Mn(2+) as a cofactor. As to expression, highly expressed in liver and kidney. Also found in skeletal muscle, fetal liver, brain, testis, skin and the gastrointestinal tract. Within brain, expression is higher in the cerebral cortex with lower levels in the medulla and spinal cord.

It is found in the mitochondrion. It catalyses the reaction 3-guanidinopropanoate + H2O = urea + beta-alanine. The catalysed reaction is 4-guanidinobutanoate + H2O = urea + 4-aminobutanoate. The enzyme catalyses taurocyamine + H2O = urea + taurine. It carries out the reaction L-arginine + H2O = urea + L-ornithine. It functions in the pathway nitrogen metabolism; urea cycle; L-ornithine and urea from L-arginine: step 1/1. Functionally, hydrolyzes linear guanidino acids to form urea and the corresponding amines. Displays specificity for substrates having a negatively charged head group and short chains including taurocyamine, guanidino propanoic and butanoic acids. May protect cells by detoxifying potentially harmful amounts of guanidino acids. Metabolizes L-arginine with low efficiency. The protein is Guanidino acid hydrolase, mitochondrial (AGMAT) of Homo sapiens (Human).